A 582-amino-acid chain; its full sequence is 2-succinyl-5-enolpyruvyl-6-hydroxy-3-cyclohexene-1-carboxylate synthase (582 aa).

Belongs to the TPP enzyme family. MenD subfamily. Homodimer. Mg(2+) is required as a cofactor. Requires Mn(2+) as cofactor. The cofactor is thiamine diphosphate.

The catalysed reaction is isochorismate + 2-oxoglutarate + H(+) = 5-enolpyruvoyl-6-hydroxy-2-succinyl-cyclohex-3-ene-1-carboxylate + CO2. Its pathway is quinol/quinone metabolism; 1,4-dihydroxy-2-naphthoate biosynthesis; 1,4-dihydroxy-2-naphthoate from chorismate: step 2/7. It participates in cofactor biosynthesis; phylloquinone biosynthesis. Functionally, catalyzes the thiamine diphosphate-dependent decarboxylation of 2-oxoglutarate and the subsequent addition of the resulting succinic semialdehyde-thiamine pyrophosphate anion to isochorismate to yield 2-succinyl-5-enolpyruvyl-6-hydroxy-3-cyclohexene-1-carboxylate (SEPHCHC). In Prochlorococcus marinus (strain MIT 9313), this protein is 2-succinyl-5-enolpyruvyl-6-hydroxy-3-cyclohexene-1-carboxylate synthase.